We begin with the raw amino-acid sequence, 490 residues long: 3-octaprenyl-4-hydroxybenzoate carboxy-lyase (490 aa).

Asn172 provides a ligand contact to Mn(2+). Prenylated FMN-binding positions include 175-177, 189-191, and 194-195; these read IYR, RWL, and RG. Residue Glu238 participates in Mn(2+) binding. Asp287 acts as the Proton donor in catalysis.

This sequence belongs to the UbiD family. As to quaternary structure, homohexamer. Prenylated FMN is required as a cofactor. Mn(2+) serves as cofactor.

The protein localises to the cell membrane. The enzyme catalyses a 4-hydroxy-3-(all-trans-polyprenyl)benzoate + H(+) = a 2-(all-trans-polyprenyl)phenol + CO2. It functions in the pathway cofactor biosynthesis; ubiquinone biosynthesis. Catalyzes the decarboxylation of 3-octaprenyl-4-hydroxy benzoate to 2-octaprenylphenol, an intermediate step in ubiquinone biosynthesis. This chain is 3-octaprenyl-4-hydroxybenzoate carboxy-lyase, found in Idiomarina loihiensis (strain ATCC BAA-735 / DSM 15497 / L2-TR).